Here is a 203-residue protein sequence, read N- to C-terminus: Eukaryotic translation initiation factor isoform 4E (203 aa).

The span at 1 to 25 (MATETAGAVVESSSAATVPSPAPEA) shows a compositional bias: low complexity. Residues 1 to 27 (MATETAGAVVESSSAATVPSPAPEAGS) form a disordered region. Residues 47 to 52 (QGAAWG), Lys79, and 97 to 98 (WE) each bind mRNA. Cysteines 102 and 141 form a disulfide. 148–153 (RQRQDK) contributes to the mRNA binding site.

Belongs to the eukaryotic initiation factor 4E family. EIF4F is a multi-subunit complex, the composition of which varies with external and internal environmental conditions. It is composed of at least EIF4A, EIF4E and EIF4G. EIF4E is also known to interact with other partners. In higher plants two isoforms of EIF4F have been identified, named isoform EIF4F and isoform EIF(iso)4F. Isoform EIF4F has subunits p220 and p26, whereas isoform EIF(iso)4F has subunits p82 and p28. In terms of assembly, (Microbial infection) Interacts with the potyvirus peanut stripe virus (PStV) helper component proteinase (HC-Pro) in the cytoplasm and with PStV viral genome-linked protein (VPg) in the nucleus; these interactions are possible in susceptible hosts but impaired in resistant plants. According to the redox status, the Cys-102-Cys-141 disulfide bridge may have a role in regulating protein function by affecting its ability to bind capped mRNA. Expressed ubiquitously with highest levels in young leaves and roots, and lowest levels in flowers.

The protein resides in the cytoplasm. The protein localises to the nucleus. In terms of biological role, component of the protein complex eIF4F, which is involved in the recognition of the mRNA cap, ATP-dependent unwinding of 5'-terminal secondary structure and recruitment of mRNA to the ribosome. Recognizes and binds the 7-methylguanosine-containing mRNA cap during an early step in the initiation of protein synthesis and facilitates ribosome binding by inducing the unwinding of the mRNAs secondary structures. Key component of recessive resistance to potyviruses such as peanut stripe virus (PStV). (Microbial infection) Susceptibility host factor required for viral infection by recruiting viral RNAs to the host ribosomal complex via an interaction with viral genome-linked protein (VPg). This is Eukaryotic translation initiation factor isoform 4E from Arachis hypogaea (Peanut).